We begin with the raw amino-acid sequence, 211 residues long: Prolactin-1 (211 aa).

The first 23 residues, methionine 1–alanine 23, serve as a signal peptide directing secretion. 2 disulfides stabilise this stretch: cysteine 69–cysteine 184 and cysteine 201–cysteine 211.

The protein belongs to the somatotropin/prolactin family.

The protein localises to the secreted. The sequence is that of Prolactin-1 (prl1) from Oncorhynchus keta (Chum salmon).